The sequence spans 315 residues: DNA-directed RNA polymerase subunit alpha (315 aa).

Residues 1–228 form an alpha N-terminal domain (alpha-NTD) region; it reads MLEIEKPIIE…EHFKLFMSLT (228 aa). The alpha C-terminal domain (alpha-CTD) stretch occupies residues 245 to 315; it reads KEKVLEMTVE…LGLCLKLNDE (71 aa).

Belongs to the RNA polymerase alpha chain family. As to quaternary structure, homodimer. The RNAP catalytic core consists of 2 alpha, 1 beta, 1 beta' and 1 omega subunit. When a sigma factor is associated with the core the holoenzyme is formed, which can initiate transcription.

It catalyses the reaction RNA(n) + a ribonucleoside 5'-triphosphate = RNA(n+1) + diphosphate. Functionally, DNA-dependent RNA polymerase catalyzes the transcription of DNA into RNA using the four ribonucleoside triphosphates as substrates. In Clostridium botulinum (strain Alaska E43 / Type E3), this protein is DNA-directed RNA polymerase subunit alpha.